The primary structure comprises 123 residues: Fluoride-specific ion channel FluC (123 aa).

The next 4 helical transmembrane spans lie at I5–G25, I35–L55, I67–T87, and F100–L120. G75 and S78 together coordinate Na(+).

It belongs to the fluoride channel Fluc/FEX (TC 1.A.43) family.

The protein resides in the cell membrane. The enzyme catalyses fluoride(in) = fluoride(out). Na(+) is not transported, but it plays an essential structural role and its presence is essential for fluoride channel function. In terms of biological role, fluoride-specific ion channel. Important for reducing fluoride concentration in the cell, thus reducing its toxicity. The protein is Fluoride-specific ion channel FluC of Pyrococcus horikoshii (strain ATCC 700860 / DSM 12428 / JCM 9974 / NBRC 100139 / OT-3).